Consider the following 229-residue polypeptide: Transmembrane emp24 domain-containing protein 5 (229 aa).

The first 27 residues, 1–27, serve as a signal peptide directing secretion; sequence MGDKIWLPFPVLLLAALPPVLLPGAAG. Over 28-196 the chain is Lumenal; that stretch reads FTPSLDSDFT…IQESNFDRVN (169 aa). The GOLD domain occupies 45 to 126; the sequence is RECFYQPMPL…EKVIFFELIL (82 aa). A helical membrane pass occupies residues 197 to 217; it reads FWSMVNLVVMVVVSAIQVYML. Over 218–229 the chain is Cytoplasmic; sequence KSLFEDKRKSRT.

This sequence belongs to the EMP24/GP25L family. In terms of assembly, interacts with TMED9 and TMED10.

Its subcellular location is the endoplasmic reticulum membrane. It localises to the golgi apparatus. It is found in the cis-Golgi network membrane. The protein localises to the endoplasmic reticulum-Golgi intermediate compartment membrane. Potential role in vesicular protein trafficking, mainly in the early secretory pathway. Required for the maintenance of the Golgi apparatus; involved in protein exchange between Golgi stacks during assembly. Probably not required for COPI-vesicle-mediated retrograde transport. This chain is Transmembrane emp24 domain-containing protein 5 (TMED5), found in Pongo abelii (Sumatran orangutan).